A 338-amino-acid polypeptide reads, in one-letter code: Tagatose 1,6-diphosphate aldolase (338 aa).

This sequence belongs to the aldolase LacD family.

The catalysed reaction is D-tagatofuranose 1,6-bisphosphate = D-glyceraldehyde 3-phosphate + dihydroxyacetone phosphate. It participates in carbohydrate metabolism; D-tagatose 6-phosphate degradation; D-glyceraldehyde 3-phosphate and glycerone phosphate from D-tagatose 6-phosphate: step 2/2. This Listeria monocytogenes serovar 1/2a (strain ATCC BAA-679 / EGD-e) protein is Tagatose 1,6-diphosphate aldolase.